Consider the following 712-residue polypeptide: T-box transcription factor TBX2 (712 aa).

The T-box DNA-binding region spans leucine 109–aspartate 287. Residues proline 313–leucine 450 are disordered. The segment covering aspartate 326–serine 336 has biased composition (pro residues). Phosphoserine is present on residues serine 336, serine 342, and serine 360. 3 stretches are compositionally biased toward basic and acidic residues: residues glutamate 363–alanine 372, threonine 391–alanine 409, and serine 421–glutamate 444. The repression domain 1 (RD1) stretch occupies residues glycine 518–alanine 601. Serine 622, serine 653, serine 657, and serine 676 each carry phosphoserine. A disordered region spans residues leucine 637–glutamate 687.

In terms of assembly, binds DNA as a monomer. Interacts with PML (isoform PML-2, isoform PML-3 and isoform PML-4). Expressed primarily in adult in kidney, lung, and placenta. Weak expression in heart and ovary.

It localises to the nucleus. Functionally, transcription factor which acts as a transcriptional repressor. May also function as a transcriptional activator. Binds to the palindromic T site 5'-TTCACACCTAGGTGTGAA-3' DNA sequence, or a half-site, which are present in the regulatory region of several genes. Required for cardiac atrioventricular canal formation. May cooperate with NKX2.5 to negatively modulate expression of NPPA/ANF in the atrioventricular canal. May play a role as a positive regulator of TGFB2 expression, perhaps acting in concert with GATA4 in the developing outflow tract myocardium. Plays a role in limb pattern formation. Acts as a transcriptional repressor of ADAM10 gene expression, perhaps in concert with histone deacetylase HDAC1 as cofactor. Involved in branching morphogenesis in both developing lungs and adult mammary glands, via negative modulation of target genes; acting redundantly with TBX3. Required, together with TBX3, to maintain cell proliferation in the embryonic lung mesenchyme; perhaps acting downstream of SHH, BMP and TGFbeta signaling. Involved in modulating early inner ear development, acting independently of, and also redundantly with TBX3, in different subregions of the developing ear. Acts as a negative regulator of PML function in cellular senescence. Acts as a negative regulator of expression of CDKN1A/p21, IL33 and CCN4; repression of CDKN1A is enhanced in response to UV-induced stress, perhaps as a result of phosphorylation by p38 MAPK. Negatively modulates expression of CDKN2A/p14ARF and CDH1/E-cadherin. Plays a role in induction of the epithelial-mesenchymal transition (EMT). Plays a role in melanocyte proliferation, perhaps via regulation of cyclin CCND1. Involved in melanogenesis, acting via negative modulation of expression of DHICA oxidase/TYRP1 and P protein/OCA2. Involved in regulating retinal pigment epithelium (RPE) cell proliferation, perhaps via negatively modulating transcription of the transcription factor CEBPD. The protein is T-box transcription factor TBX2 (TBX2) of Homo sapiens (Human).